The chain runs to 105 residues: Nucleoid-associated protein Sca_0120 (105 aa).

The disordered stretch occupies residues 1–36 (MRGGGNMQQMMKQMQKMQKKMAEEQEKLKDEKVEGS). The span at 7–16 (MQQMMKQMQK) shows a compositional bias: low complexity. Residues 20–34 (KMAEEQEKLKDEKVE) show a composition bias toward basic and acidic residues.

It belongs to the YbaB/EbfC family. In terms of assembly, homodimer.

It localises to the cytoplasm. It is found in the nucleoid. In terms of biological role, binds to DNA and alters its conformation. May be involved in regulation of gene expression, nucleoid organization and DNA protection. In Staphylococcus carnosus (strain TM300), this protein is Nucleoid-associated protein Sca_0120.